A 245-amino-acid chain; its full sequence is Ribonuclease PH (245 aa).

Phosphate is bound by residues Arg-87 and 125 to 127; that span reads GTR.

Belongs to the RNase PH family. Homohexameric ring arranged as a trimer of dimers.

It catalyses the reaction tRNA(n+1) + phosphate = tRNA(n) + a ribonucleoside 5'-diphosphate. In terms of biological role, phosphorolytic 3'-5' exoribonuclease that plays an important role in tRNA 3'-end maturation. Removes nucleotide residues following the 3'-CCA terminus of tRNAs; can also add nucleotides to the ends of RNA molecules by using nucleoside diphosphates as substrates, but this may not be physiologically important. Probably plays a role in initiation of 16S rRNA degradation (leading to ribosome degradation) during starvation. This Streptomyces griseus subsp. griseus (strain JCM 4626 / CBS 651.72 / NBRC 13350 / KCC S-0626 / ISP 5235) protein is Ribonuclease PH.